Consider the following 201-residue polypeptide: MCAARLAAAAAQSVYAFSARPLAGGEPVSLGSLRGKVLLIENVASLUGTTVRDYTQMNELQRRLGPRGLVVLGFPCNQFGHQENAKNEEILNSLKYVRPGGGFEPNFMLFEKCEVNGAGAHPLFAFLREALPAPSDDATALMTDPKLIAWSPVCRNDVAWNFEKFLVGPDGVPVRRYSRRFQTIDIEPDIEALLSQGPSSA.

Phosphoserine is present on Ser32. The active site involves Sec47. Residue Sec47 is a non-standard amino acid, selenocysteine. N6-acetyllysine; alternate is present on residues Lys86, Lys112, and Lys146. Residues Lys86, Lys112, and Lys146 each carry the N6-succinyllysine; alternate modification. 2 positions are modified to phosphoserine: Ser195 and Ser199.

The protein belongs to the glutathione peroxidase family. As to quaternary structure, homotetramer. Interacts with MIEN1. In terms of processing, during periods of oxidative stress, Sec-47 may react with a superoxide radical, irreversibly lose hydroselenide and be converted to dehydroalanine.

The protein resides in the cytoplasm. Its subcellular location is the mitochondrion. It catalyses the reaction 2 glutathione + H2O2 = glutathione disulfide + 2 H2O. The catalysed reaction is a hydroperoxy polyunsaturated fatty acid + 2 glutathione = a hydroxy polyunsaturated fatty acid + glutathione disulfide + H2O. It carries out the reaction tert-butyl hydroperoxide + 2 glutathione = tert-butanol + glutathione disulfide + H2O. The enzyme catalyses cumene hydroperoxide + 2 glutathione = 2-phenylpropan-2-ol + glutathione disulfide + H2O. It catalyses the reaction (13S)-hydroperoxy-(9Z,11E)-octadecadienoate + 2 glutathione = (13S)-hydroxy-(9Z,11E)-octadecadienoate + glutathione disulfide + H2O. The catalysed reaction is (9S)-hydroperoxy-(10E,12Z)-octadecadienoate + 2 glutathione = (9S)-hydroxy-(10E,12Z)-octadecadienoate + glutathione disulfide + H2O. It carries out the reaction (5S)-hydroperoxy-(6E,8Z,11Z,14Z)-eicosatetraenoate + 2 glutathione = (5S)-hydroxy-(6E,8Z,11Z,14Z)-eicosatetraenoate + glutathione disulfide + H2O. The enzyme catalyses (12S)-hydroperoxy-(5Z,8Z,10E,14Z)-eicosatetraenoate + 2 glutathione = (12S)-hydroxy-(5Z,8Z,10E,14Z)-eicosatetraenoate + glutathione disulfide + H2O. It catalyses the reaction (12R)-hydroperoxy-(5Z,8Z,10E,14Z)-eicosatetraenoate + 2 glutathione = (12R)-hydroxy-(5Z,8Z,10E,14Z)-eicosatetraenoate + glutathione disulfide + H2O. The catalysed reaction is (15S)-hydroperoxy-(5Z,8Z,11Z,13E)-eicosatetraenoate + 2 glutathione = (15S)-hydroxy-(5Z,8Z,11Z,13E)-eicosatetraenoate + glutathione disulfide + H2O. It carries out the reaction (5S)-hydroperoxy-(6E,8Z,11Z,14Z,17Z)-eicosapentaenoate + 2 glutathione = (5S)-hydroxy-(6E,8Z,11Z,14Z,17Z)-eicosapentaenoate + glutathione disulfide + H2O. The enzyme catalyses (12S)-hydroperoxy-(5Z,8Z,10E,14Z,17Z)-eicosapentaenoate + 2 glutathione = (12S)-hydroxy-(5Z,8Z,10E,14Z,17Z)-eicosapentaenoate + glutathione disulfide + H2O. It catalyses the reaction (15S)-hydroperoxy-(5Z,8Z,11Z,13E,17Z)-eicosapentaenoate + 2 glutathione = (15S)-hydroxy-(5Z,8Z,11Z,13E,17Z)-eicosapentaenoate + glutathione disulfide + H2O. The catalysed reaction is (15S)-hydroperoxy-(11Z,13E)-eicosadienoate + 2 glutathione = (15S)-hydroxy-(11Z,13E)-eicosadienoate + glutathione disulfide + H2O. It carries out the reaction (17S)-hydroperoxy-(4Z,7Z,10Z,13Z,15E,19Z)-docosahexaenoate + 2 glutathione = (17S)-hydroxy-(4Z,7Z,10Z,13Z,15E,19Z)-docosahexaenoate + glutathione disulfide + H2O. Its function is as follows. Catalyzes the reduction of hydroperoxides in a glutathione-dependent manner thus regulating cellular redox homeostasis. Can reduce small soluble hydroperoxides such as H2O2, cumene hydroperoxide and tert-butyl hydroperoxide, as well as several fatty acid-derived hydroperoxides. In platelets catalyzes the reduction of 12-hydroperoxyeicosatetraenoic acid, the primary product of the arachidonate 12-lipoxygenase pathway. The polypeptide is Glutathione peroxidase 1 (GPX1) (Macaca fuscata fuscata (Japanese macaque)).